A 136-amino-acid polypeptide reads, in one-letter code: uncharacterized protein (136 aa).

The disordered stretch occupies residues 1–100 (MQSREPSGWR…PCSGGPDRPE (100 aa)). The span at 66-75 (RLLRWHHRVP) shows a compositional bias: basic residues.

This is an uncharacterized protein from Homo sapiens (Human).